The sequence spans 301 residues: Tyrosine recombinase XerC (301 aa).

The 85-residue stretch at 1-85 (MELISLFKQY…ALRSFYRFLV (85 aa)) folds into the Core-binding (CB) domain. The Tyr recombinase domain maps to 106-292 (KLPHFFYEKE…TKEKLQESYR (187 aa)). Residues R147, K171, H244, R247, and H270 contribute to the active site. Y279 acts as the O-(3'-phospho-DNA)-tyrosine intermediate in catalysis.

The protein belongs to the 'phage' integrase family. XerC subfamily. In terms of assembly, forms a cyclic heterotetrameric complex composed of two molecules of XerC and two molecules of XerD.

The protein localises to the cytoplasm. Its function is as follows. Site-specific tyrosine recombinase, which acts by catalyzing the cutting and rejoining of the recombining DNA molecules. The XerC-XerD complex is essential to convert dimers of the bacterial chromosome into monomers to permit their segregation at cell division. It also contributes to the segregational stability of plasmids. The chain is Tyrosine recombinase XerC from Pediococcus pentosaceus (strain ATCC 25745 / CCUG 21536 / LMG 10740 / 183-1w).